The sequence spans 205 residues: uncharacterized protein (205 aa).

A run of 4 helical transmembrane segments spans residues 18–38 (ATVNVIHPISLCLSWFLGTIG), 69–89 (LGIFQHLFYPIIPLLAFCFYA), 106–126 (VVWILAVSRHIVFLENSYYIM), and 127–147 (LLHPHHLHHPHPPFLIFLFLI).

It localises to the mitochondrion membrane. This is an uncharacterized protein from Arabidopsis thaliana (Mouse-ear cress).